The primary structure comprises 236 residues: 2-C-methyl-D-erythritol 4-phosphate cytidylyltransferase (236 aa).

Belongs to the IspD/TarI cytidylyltransferase family. IspD subfamily.

It catalyses the reaction 2-C-methyl-D-erythritol 4-phosphate + CTP + H(+) = 4-CDP-2-C-methyl-D-erythritol + diphosphate. It functions in the pathway isoprenoid biosynthesis; isopentenyl diphosphate biosynthesis via DXP pathway; isopentenyl diphosphate from 1-deoxy-D-xylulose 5-phosphate: step 2/6. Catalyzes the formation of 4-diphosphocytidyl-2-C-methyl-D-erythritol from CTP and 2-C-methyl-D-erythritol 4-phosphate (MEP). In Burkholderia pseudomallei (strain 1106a), this protein is 2-C-methyl-D-erythritol 4-phosphate cytidylyltransferase.